A 99-amino-acid polypeptide reads, in one-letter code: Spore coat protein F-like protein YraD (99 aa).

This sequence belongs to the CotF family.

The protein resides in the spore coat. This Bacillus subtilis (strain 168) protein is Spore coat protein F-like protein YraD (yraD).